The following is a 52-amino-acid chain: UPF0391 membrane protein ACIAD3602 (52 aa).

2 helical membrane passes run 6–26 (IIFA…VAGL) and 30–50 (FAVI…ISRG).

The protein belongs to the UPF0391 family.

The protein resides in the cell membrane. This Acinetobacter baylyi (strain ATCC 33305 / BD413 / ADP1) protein is UPF0391 membrane protein ACIAD3602.